An 80-amino-acid chain; its full sequence is Acyl carrier protein (80 aa).

Positions 3-78 (DDTFSRIQSI…QVLEYIEAES (76 aa)) constitute a Carrier domain. Residue serine 38 is modified to O-(pantetheine 4'-phosphoryl)serine.

Belongs to the acyl carrier protein (ACP) family. Post-translationally, 4'-phosphopantetheine is transferred from CoA to a specific serine of apo-ACP by AcpS. This modification is essential for activity because fatty acids are bound in thioester linkage to the sulfhydryl of the prosthetic group.

It localises to the plastid. It is found in the chloroplast. It participates in lipid metabolism; fatty acid biosynthesis. Its function is as follows. Carrier of the growing fatty acid chain in fatty acid biosynthesis. The protein is Acyl carrier protein of Trieres chinensis (Marine centric diatom).